Reading from the N-terminus, the 69-residue chain is UPF0435 protein SH1076 (69 aa).

It belongs to the UPF0435 family.

This Staphylococcus haemolyticus (strain JCSC1435) protein is UPF0435 protein SH1076.